The sequence spans 451 residues: uncharacterized protein (451 aa).

This sequence to ORF5 in pFZ1.

This is an uncharacterized protein from Methanothermobacter thermautotrophicus (Methanobacterium thermoformicicum).